The sequence spans 529 residues: tRNA (uracil-O(2)-)-methyltransferase (529 aa).

A disordered region spans residues 78-107 (IFDTHEGPVDDDKKDTDKDKNTPVPPNLQD). Residues 80 to 98 (DTHEGPVDDDKKDTDKDKN) are compositionally biased toward basic and acidic residues.

Belongs to the TRM44 family.

It localises to the cytoplasm. It carries out the reaction uridine(44) in tRNA(Ser) + S-adenosyl-L-methionine = 2'-O-methyluridine(44) in tRNA(Ser) + S-adenosyl-L-homocysteine + H(+). Its function is as follows. Probable adenosyl-L-methionine (AdoMet)-dependent tRNA (uracil-O(2)-)-methyltransferase. This is tRNA (uracil-O(2)-)-methyltransferase (TRM44) from Yarrowia lipolytica (strain CLIB 122 / E 150) (Yeast).